A 311-amino-acid chain; its full sequence is DNA-directed RNA polymerase subunit alpha (311 aa).

The segment at 1-227 (MNNISIKCLK…DLFTLLINNK (227 aa)) is alpha N-terminal domain (alpha-NTD). Residues 242–311 (ISIEPYTNIA…LKNKLGIILK (70 aa)) are alpha C-terminal domain (alpha-CTD).

The protein belongs to the RNA polymerase alpha chain family. In plastids the minimal PEP RNA polymerase catalytic core is composed of four subunits: alpha, beta, beta', and beta''. When a (nuclear-encoded) sigma factor is associated with the core the holoenzyme is formed, which can initiate transcription.

Its subcellular location is the plastid. It localises to the chloroplast. It carries out the reaction RNA(n) + a ribonucleoside 5'-triphosphate = RNA(n+1) + diphosphate. Its function is as follows. DNA-dependent RNA polymerase catalyzes the transcription of DNA into RNA using the four ribonucleoside triphosphates as substrates. The sequence is that of DNA-directed RNA polymerase subunit alpha from Phaeodactylum tricornutum (strain CCAP 1055/1).